Here is a 305-residue protein sequence, read N- to C-terminus: UDP-3-O-acyl-N-acetylglucosamine deacetylase (305 aa).

The Zn(2+) site is built by His79, His238, and Asp242. Catalysis depends on His265, which acts as the Proton donor.

The protein belongs to the LpxC family. It depends on Zn(2+) as a cofactor.

The enzyme catalyses a UDP-3-O-[(3R)-3-hydroxyacyl]-N-acetyl-alpha-D-glucosamine + H2O = a UDP-3-O-[(3R)-3-hydroxyacyl]-alpha-D-glucosamine + acetate. The protein operates within glycolipid biosynthesis; lipid IV(A) biosynthesis; lipid IV(A) from (3R)-3-hydroxytetradecanoyl-[acyl-carrier-protein] and UDP-N-acetyl-alpha-D-glucosamine: step 2/6. Catalyzes the hydrolysis of UDP-3-O-myristoyl-N-acetylglucosamine to form UDP-3-O-myristoylglucosamine and acetate, the committed step in lipid A biosynthesis. In Enterobacter sp. (strain 638), this protein is UDP-3-O-acyl-N-acetylglucosamine deacetylase.